We begin with the raw amino-acid sequence, 304 residues long: Quinolinate synthase (304 aa).

Histidine 23 and serine 40 together coordinate iminosuccinate. Cysteine 85 lines the [4Fe-4S] cluster pocket. Iminosuccinate contacts are provided by residues 111–113 (YVN) and serine 128. Cysteine 171 contributes to the [4Fe-4S] cluster binding site. Residues 197-199 (HPE) and threonine 214 contribute to the iminosuccinate site. Cysteine 259 serves as a coordination point for [4Fe-4S] cluster.

This sequence belongs to the quinolinate synthase family. Type 2 subfamily. The cofactor is [4Fe-4S] cluster.

Its subcellular location is the cytoplasm. It carries out the reaction iminosuccinate + dihydroxyacetone phosphate = quinolinate + phosphate + 2 H2O + H(+). The protein operates within cofactor biosynthesis; NAD(+) biosynthesis; quinolinate from iminoaspartate: step 1/1. Functionally, catalyzes the condensation of iminoaspartate with dihydroxyacetone phosphate to form quinolinate. This Pelobacter propionicus (strain DSM 2379 / NBRC 103807 / OttBd1) protein is Quinolinate synthase.